Reading from the N-terminus, the 186-residue chain is Putative 5'(3')-deoxyribonucleotidase (186 aa).

Aspartate 6 serves as the catalytic Nucleophile. The Mg(2+) site is built by aspartate 6, aspartate 8, and aspartate 137. The active-site Proton donor is aspartate 8.

It belongs to the 5'(3')-deoxyribonucleotidase family. Mg(2+) is required as a cofactor.

In terms of biological role, dephosphorylates the 5' and 2'(3')-phosphates of deoxyribonucleotides. This chain is Putative 5'(3')-deoxyribonucleotidase, found in Bordetella bronchiseptica (strain ATCC BAA-588 / NCTC 13252 / RB50) (Alcaligenes bronchisepticus).